The sequence spans 202 residues: Translation initiation factor IF-3 (202 aa).

The disordered stretch occupies residues Thr-178–Asn-202. Over residues Leu-185–Lys-196 the composition is skewed to basic and acidic residues.

Belongs to the IF-3 family. In terms of assembly, monomer.

The protein localises to the cytoplasm. Functionally, IF-3 binds to the 30S ribosomal subunit and shifts the equilibrium between 70S ribosomes and their 50S and 30S subunits in favor of the free subunits, thus enhancing the availability of 30S subunits on which protein synthesis initiation begins. In Prochlorococcus marinus (strain NATL1A), this protein is Translation initiation factor IF-3.